The following is a 573-amino-acid chain: Maestro heat-like repeat-containing protein family member 9 (573 aa).

HEAT repeat units follow at residues 118–155 (LYKL…FTVT), 252–289 (PLLT…FHAE), 292–328 (TMVS…TSPK), 357–394 (SVAP…ITNL), and 418–458 (QYFP…LLNC).

The protein is Maestro heat-like repeat-containing protein family member 9 (MROH9) of Homo sapiens (Human).